A 640-amino-acid chain; its full sequence is Chaperone protein DnaK (640 aa).

A Phosphothreonine; by autocatalysis modification is found at Thr-199. Residues 606 to 621 show a composition bias toward low complexity; sequence QQAAGAGAQQADGTGK. The interval 606–640 is disordered; the sequence is QQAAGAGAQQADGTGKAADDGVVDAEFEEVKEDNK. Positions 626-640 are enriched in acidic residues; it reads GVVDAEFEEVKEDNK.

The protein belongs to the heat shock protein 70 family.

In terms of biological role, acts as a chaperone. This Cellvibrio japonicus (strain Ueda107) (Pseudomonas fluorescens subsp. cellulosa) protein is Chaperone protein DnaK.